The following is a 300-amino-acid chain: DDRGK domain-containing protein 1 (300 aa).

Residues 1 to 2 (MD) are Lumenal-facing. A helical transmembrane segment spans residues 3-23 (VVLYIAAAAILLVLIVFSVKI). The Cytoplasmic segment spans residues 24 to 300 (RGRTQDADVE…NLTPDIHSSA (277 aa)). Residues 28–173 (QDADVEDHQN…RVKEEQERRE (146 aa)) form a disordered region. The segment covering 78-90 (NEDSPVEADEDEE) has biased composition (acidic residues). Positions 112–173 (KLEEKQARKA…RVKEEQERRE (62 aa)) are enriched in basic and acidic residues. Residues 183–197 (SFIIEDQGEAEELTE) carry the UFM1-interacting motif (UFIM) motif. Residues 217–261 (VLLEDLASQFGLRTQDAIARLQDLIADGSLTGVIDDRGKFIFITP) enclose the PCI domain.

The protein belongs to the DDRGK1 family. Component of the UFM1 ribosome E3 ligase (UREL) complex, composed of ufl1, ddrgk1 and cdk5rap3.

The protein resides in the endoplasmic reticulum membrane. Component of the UFM1 ribosome E3 ligase (UREL) complex, a multiprotein complex that catalyzes ufmylation of endoplasmic reticulum-docked proteins. The UREL complex plays a key role in ribosome recycling by mediating mono-ufmylation of the RPL26/uL24 subunit of the 60S ribosome following ribosome dissociation: ufmylation weakens the junction between post-termination 60S subunits and SEC61 translocons, promoting release and recycling of the large ribosomal subunit from the endoplasmic reticulum membrane. Ufmylation of RPL26/uL24 and subsequent 60S ribosome recycling either take place after normal termination of translation or after ribosome stalling during cotranslational translocation at the endoplasmic reticulum. Within the UREL complex, DDRGK1 tethers the complex to the endoplasmic reticulum membrane to restrict its activity to endoplasmic reticulum-docked ribosomes and acts as an ufmylation 'reader': following RPL26/uL24 ufmylation, DDRGK1 specifically binds to ufmylated RPL26/uL24 via its UFIM motif, resulting in stable association between the 60S ribosome and the UREL complex, followed by dissociation of the 60S ribosome subunit from the endoplasmic reticulum membrane. The UREL complex is also involved in reticulophagy in response to endoplasmic reticulum stress by promoting ufmylation of proteins such as CYB5R3 and RPN1, thereby promoting lysosomal degradation of ufmylated proteins. Plays a role in cartilage development through sox9, inhibiting the ubiquitin-mediated proteasomal degradation of this transcriptional regulator. Required for stabilization and ufmylation of ATG9A. The chain is DDRGK domain-containing protein 1 from Danio rerio (Zebrafish).